The chain runs to 255 residues: tRNA (guanine-N(1)-)-methyltransferase (255 aa).

Residues glycine 114 and 134 to 139 (IGDYIL) contribute to the S-adenosyl-L-methionine site.

It belongs to the RNA methyltransferase TrmD family. In terms of assembly, homodimer.

It is found in the cytoplasm. The catalysed reaction is guanosine(37) in tRNA + S-adenosyl-L-methionine = N(1)-methylguanosine(37) in tRNA + S-adenosyl-L-homocysteine + H(+). Specifically methylates guanosine-37 in various tRNAs. The sequence is that of tRNA (guanine-N(1)-)-methyltransferase from Blochmanniella pennsylvanica (strain BPEN).